The following is a 523-amino-acid chain: 2-isopropylmalate synthase (523 aa).

The Pyruvate carboxyltransferase domain maps to 5–267 (VIIFDTTLRD…ETGINAKEIH (263 aa)). 4 residues coordinate Mn(2+): Asp-14, His-202, His-204, and Asn-238. Residues 392-523 (QLKQLVVHSD…QQKARSLGGV (132 aa)) are regulatory domain.

The protein belongs to the alpha-IPM synthase/homocitrate synthase family. LeuA type 1 subfamily. In terms of assembly, homodimer. Mn(2+) serves as cofactor.

The protein localises to the cytoplasm. The enzyme catalyses 3-methyl-2-oxobutanoate + acetyl-CoA + H2O = (2S)-2-isopropylmalate + CoA + H(+). It functions in the pathway amino-acid biosynthesis; L-leucine biosynthesis; L-leucine from 3-methyl-2-oxobutanoate: step 1/4. Functionally, catalyzes the condensation of the acetyl group of acetyl-CoA with 3-methyl-2-oxobutanoate (2-ketoisovalerate) to form 3-carboxy-3-hydroxy-4-methylpentanoate (2-isopropylmalate). The chain is 2-isopropylmalate synthase from Shewanella woodyi (strain ATCC 51908 / MS32).